The primary structure comprises 294 residues: Ribosomal RNA small subunit methyltransferase H (294 aa).

S-adenosyl-L-methionine-binding positions include 36–38, aspartate 55, phenylalanine 82, aspartate 97, and glutamine 104; that span reads GGH.

The protein belongs to the methyltransferase superfamily. RsmH family.

It is found in the cytoplasm. The catalysed reaction is cytidine(1402) in 16S rRNA + S-adenosyl-L-methionine = N(4)-methylcytidine(1402) in 16S rRNA + S-adenosyl-L-homocysteine + H(+). Its function is as follows. Specifically methylates the N4 position of cytidine in position 1402 (C1402) of 16S rRNA. The sequence is that of Ribosomal RNA small subunit methyltransferase H from Synechococcus sp. (strain CC9605).